A 136-amino-acid polypeptide reads, in one-letter code: MFDIGFPELALVAVIGLLVLGPERLPYAARKTGLWVGRIRRMVSQMSSEIDRQLKAEEMRERLRKEGDTLGLEKIQQTVNEALAEAKKYEDMVEKNPATPMSSKASTPQTPSSGPDPQPVESHSHSDDASKQHDRS.

A helical transmembrane segment spans residues 1–21 (MFDIGFPELALVAVIGLLVLG). The tract at residues 89-136 (YEDMVEKNPATPMSSKASTPQTPSSGPDPQPVESHSHSDDASKQHDRS) is disordered. Residues 99–115 (TPMSSKASTPQTPSSGP) show a composition bias toward polar residues. Positions 122–136 (SHSHSDDASKQHDRS) are enriched in basic and acidic residues.

Belongs to the TatB family. In terms of assembly, the Tat system comprises two distinct complexes: a TatABC complex, containing multiple copies of TatA, TatB and TatC subunits, and a separate TatA complex, containing only TatA subunits. Substrates initially bind to the TatABC complex, which probably triggers association of the separate TatA complex to form the active translocon.

It is found in the cell inner membrane. Its function is as follows. Part of the twin-arginine translocation (Tat) system that transports large folded proteins containing a characteristic twin-arginine motif in their signal peptide across membranes. Together with TatC, TatB is part of a receptor directly interacting with Tat signal peptides. TatB may form an oligomeric binding site that transiently accommodates folded Tat precursor proteins before their translocation. The chain is Sec-independent protein translocase protein TatB from Hahella chejuensis (strain KCTC 2396).